The following is a 1155-amino-acid chain: ATP-dependent helicase/deoxyribonuclease subunit B (1155 aa).

One can recognise a UvrD-like helicase ATP-binding domain in the interval 1–278 (MSQLNAYIGR…FTKQERFENR (278 aa)). 9 to 16 (GRAGTGKS) provides a ligand contact to ATP. The UvrD-like helicase C-terminal domain maps to 270-584 (TKQERFENRD…SIGSMDLAKV (315 aa)). Residues Cys-785, Cys-1112, Cys-1115, and Cys-1121 each coordinate [4Fe-4S] cluster.

The protein belongs to the helicase family. AddB/RexB type 1 subfamily. In terms of assembly, heterodimer of AddA and AddB. Requires Mg(2+) as cofactor. [4Fe-4S] cluster serves as cofactor.

The heterodimer acts as both an ATP-dependent DNA helicase and an ATP-dependent, dual-direction single-stranded exonuclease. Recognizes the chi site generating a DNA molecule suitable for the initiation of homologous recombination. The AddB subunit has 5' -&gt; 3' nuclease activity but not helicase activity. The sequence is that of ATP-dependent helicase/deoxyribonuclease subunit B from Staphylococcus carnosus (strain TM300).